Consider the following 550-residue polypeptide: MEIQRPVINLMVLHSQHDKSDNLSRRESLAGKSKWRTSLSRSSSSSSSNNNSPTKTEIPAEFLCPISGSLMADPIIVSSGHSYERACVIACKTLGFTPTPPPDFSTVIPNLALKSAIHSWCERRCFPPPKPLNSAAAEKLILALMEKKPQRRKVSVSEKELIQAIRDKPSVRLNHAATELDRRPNYFNSSSDESIASSSRTLQLTTKPSCFSSPSSGEIESLEPNLTPEEEALLTKLKSNRISEIEEALISIRRITRIDESSRISLCTTRVISALKSLIVSRYATVQVNVTAVLVNLSLEKSNKVKIVRSGIVPPLIDVLKCGSVEAQEHSAGVIFSLALEDENKTAIGVLGGLEPLLHLIRVGTELTRHDSALALYHLSLVQSNRGKLVKLGAVQMLLGMVSLGQMIGRVLLILCNMASCPVSRPALLDSGGVECMVGVLRRDREVNESTRESCVAVLYGLSHDGGLRFKGLAMAANAVEELVKVERSGRERAKQKARRVLEVLRAKIEDDDLVENEEIDWEELLNSGDVSRSRCRLGGEKSCVNSAEF.

Residues 19-29 (KSDNLSRRESL) show a composition bias toward basic and acidic residues. The tract at residues 19 to 55 (KSDNLSRRESLAGKSKWRTSLSRSSSSSSSNNNSPTK) is disordered. Residues 38–52 (SLSRSSSSSSSNNNS) show a composition bias toward low complexity. The region spanning 57–127 (EIPAEFLCPI…HSWCERRCFP (71 aa)) is the U-box domain. ARM repeat units lie at residues 260–299 (ESSR…NLSL), 301–340 (KSNK…SLAL), 342–381 (DENK…HLSL), 383–420 (QSNR…NMAS), and 422–464 (PVSR…GLSH).

The enzyme catalyses S-ubiquitinyl-[E2 ubiquitin-conjugating enzyme]-L-cysteine + [acceptor protein]-L-lysine = [E2 ubiquitin-conjugating enzyme]-L-cysteine + N(6)-ubiquitinyl-[acceptor protein]-L-lysine.. It participates in protein modification; protein ubiquitination. In terms of biological role, functions as an E3 ubiquitin ligase. The chain is U-box domain-containing protein 40 (PUB40) from Arabidopsis thaliana (Mouse-ear cress).